The following is a 678-amino-acid chain: DNA ligase (678 aa).

NAD(+)-binding positions include 47–51, 96–97, and Glu122; these read DSDYD and SL. Lys124 serves as the catalytic N6-AMP-lysine intermediate. The NAD(+) site is built by Arg145, Glu182, Lys300, and Lys324. Zn(2+) is bound by residues Cys418, Cys421, Cys436, and Cys442. The BRCT domain occupies 602-678; the sequence is AYNESFTGKT…ILEDNLKDLL (77 aa).

The protein belongs to the NAD-dependent DNA ligase family. LigA subfamily. Mg(2+) is required as a cofactor. Mn(2+) serves as cofactor.

It catalyses the reaction NAD(+) + (deoxyribonucleotide)n-3'-hydroxyl + 5'-phospho-(deoxyribonucleotide)m = (deoxyribonucleotide)n+m + AMP + beta-nicotinamide D-nucleotide.. In terms of biological role, DNA ligase that catalyzes the formation of phosphodiester linkages between 5'-phosphoryl and 3'-hydroxyl groups in double-stranded DNA using NAD as a coenzyme and as the energy source for the reaction. It is essential for DNA replication and repair of damaged DNA. This Francisella tularensis subsp. novicida (strain U112) protein is DNA ligase.